The primary structure comprises 241 residues: tRNA pseudouridine synthase B (241 aa).

Aspartate 52 functions as the Nucleophile in the catalytic mechanism.

Belongs to the pseudouridine synthase TruB family. Type 1 subfamily.

It carries out the reaction uridine(55) in tRNA = pseudouridine(55) in tRNA. Its function is as follows. Responsible for synthesis of pseudouridine from uracil-55 in the psi GC loop of transfer RNAs. This is tRNA pseudouridine synthase B from Chloroherpeton thalassium (strain ATCC 35110 / GB-78).